We begin with the raw amino-acid sequence, 1057 residues long: Hemophilin receptor (1057 aa).

The TBDR plug domain occupies 168-285 (KVYDANRSSV…VGGAVVVKTL (118 aa)). Residues 296-1057 (SFGAELKVEG…TMKISWTTKF (762 aa)) enclose the TBDR beta-barrel domain.

This sequence belongs to the TonB-dependent receptor family.

The protein resides in the cell outer membrane. In terms of biological role, part of a high affinity heme acquisition system. Functions as a gateway for heme entry into the bacterial cell, enabling growth on hemoprotein sources. Can acquire heme directly from hemoprotein reservoirs, however, HphA likely enhances the efficiency of this process by delivering heme to HphR. Is essential for virulence, bacterial dissemination and growth in the blood. This is Hemophilin receptor from Acinetobacter baumannii.